The chain runs to 166 residues: Cofilin-1 (166 aa).

Ala2 carries the N-acetylalanine modification. Residues Ser3 and Ser8 each carry the phosphoserine modification. An ADF-H domain is found at 4 to 153; sequence GVAVSDGVIK…KDRCTLAEKL (150 aa). Position 13 is an N6-acetyllysine (Lys13). Residue Thr25 is modified to Phosphothreonine. Residues 30–34 carry the Nuclear localization signal motif; the sequence is KKRKK. Ser41 carries the post-translational modification Phosphoserine. The residue at position 68 (Tyr68) is a Phosphotyrosine. N6-acetyllysine is present on Lys73. Lys132 participates in a covalent cross-link: Glycyl lysine isopeptide (Lys-Gly) (interchain with G-Cter in SUMO2). Residue Tyr140 is modified to Phosphotyrosine. Lys144 carries the post-translational modification N6-acetyllysine. Ser156 is subject to Phosphoserine.

The protein belongs to the actin-binding proteins ADF family. In terms of assembly, can bind G- and F-actin in a 1:1 ratio of cofilin to actin. It is a major component of intranuclear and cytoplasmic actin rods. Interacts with the subcortical maternal complex (SCMC) via interaction with TLE6 and NLRP5. Interacts with C9orf72. In terms of processing, inactivated by phosphorylation on Ser-3. Phosphorylated on Ser-3 in resting cells. Dephosphorylated by PDXP/chronophin; this restores its activity in promoting actin filament depolymerization. The phosphorylation of Ser-24 may prevent recognition of the nuclear localization signal. Phosphorylated via a ARRB1-RAC1-LIMK1-PAK1 cascade upon active ligand stimulation of atypical chemokine receptor ACKR2.

The protein localises to the nucleus matrix. Its subcellular location is the cytoplasm. It localises to the cytoskeleton. The protein resides in the cell projection. It is found in the ruffle membrane. The protein localises to the lamellipodium membrane. Its subcellular location is the lamellipodium. It localises to the growth cone. The protein resides in the axon. Its function is as follows. Binds to F-actin and exhibits pH-sensitive F-actin depolymerizing activity. Important for normal progress through mitosis and normal cytokinesis. In conjunction with the subcortical maternal complex (SCMC), plays an essential role for zygotes to progress beyond the first embryonic cell divisions via regulation of actin dynamics. Required for the centralization of the mitotic spindle and symmetric division of zygotes. Plays a role in the regulation of cell morphology and cytoskeletal organization in epithelial cells. Required for the up-regulation of atypical chemokine receptor ACKR2 from endosomal compartment to cell membrane, increasing its efficiency in chemokine uptake and degradation. Required for neural tube morphogenesis and neural crest cell migration. This is Cofilin-1 (Cfl1) from Rattus norvegicus (Rat).